The sequence spans 461 residues: D-phenylhydantoinase (461 aa).

Residues histidine 59, histidine 61, and lysine 151 each contribute to the a divalent metal cation site. Lysine 151 is modified (N6-carboxylysine). Tyrosine 156 lines the substrate pocket. A divalent metal cation contacts are provided by histidine 182 and histidine 239. Serine 286 serves as a coordination point for substrate. An a divalent metal cation-binding site is contributed by aspartate 313. Asparagine 335 is a substrate binding site.

Belongs to the metallo-dependent hydrolases superfamily. Hydantoinase/dihydropyrimidinase family. In terms of assembly, homotetramer. Requires a divalent metal cation as cofactor. In terms of processing, carboxylation allows a single lysine to coordinate two divalent metal cations.

It catalyses the reaction D-5-phenylhydantoin + H2O = N-carbamoyl-D-phenylglycine + H(+). Functionally, catalyzes the stereospecific hydrolysis of the cyclic amide bond of D-hydantoin derivatives with an aromatic side chains at the 5'-position. Has no activity on dihydropyrimidines. The physiological function is unknown. The chain is D-phenylhydantoinase from Escherichia coli O9:H4 (strain HS).